Here is a 289-residue protein sequence, read N- to C-terminus: ATP synthase mitochondrial F1 complex assembly factor 2 (289 aa).

A mitochondrion-targeting transit peptide spans 1–40 (MWRRCLRLRDVGRRLLNLPRSGLTASEGLGPKLPTPIRAY). N6-succinyllysine is present on K133.

It belongs to the ATP12 family. In terms of assembly, interacts with ATP5F1B; involved in the assembly of the F1 component of the mitochondrial ATP synthase (ATPase). Interacts with FMC1.

Its subcellular location is the mitochondrion inner membrane. Functionally, plays a role in the assembly of the F1 component of the mitochondrial ATP synthase (ATPase). The polypeptide is ATP synthase mitochondrial F1 complex assembly factor 2 (ATPAF2) (Bos taurus (Bovine)).